Reading from the N-terminus, the 1060-residue chain is Carbamoyl phosphate synthase large chain (1060 aa).

The segment at Met-1–Glu-401 is carboxyphosphate synthetic domain. ATP contacts are provided by Arg-129, Arg-169, Gly-175, Gly-176, Arg-208, Ile-210, Glu-215, Gly-241, Ile-242, His-243, Gln-284, and Glu-298. In terms of domain architecture, ATP-grasp 1 spans Lys-133–Val-327. Mg(2+) contacts are provided by Gln-284, Glu-298, and Asn-300. Gln-284, Glu-298, and Asn-300 together coordinate Mn(2+). Residues Ile-402–Ser-546 are oligomerization domain. The segment at Leu-547–Tyr-929 is carbamoyl phosphate synthetic domain. The ATP-grasp 2 domain occupies Glu-671–Leu-861. ATP-binding residues include Arg-707, Ala-746, Leu-748, Glu-752, Gly-777, Val-778, His-779, Ser-780, Gln-820, and Glu-832. The Mg(2+) site is built by Gln-820, Glu-832, and Asn-834. Gln-820, Glu-832, and Asn-834 together coordinate Mn(2+). One can recognise an MGS-like domain in the interval Leu-930–Asp-1060. Positions Leu-930–Asp-1060 are allosteric domain.

It belongs to the CarB family. Composed of two chains; the small (or glutamine) chain promotes the hydrolysis of glutamine to ammonia, which is used by the large (or ammonia) chain to synthesize carbamoyl phosphate. Tetramer of heterodimers (alpha,beta)4. Requires Mg(2+) as cofactor. It depends on Mn(2+) as a cofactor.

It catalyses the reaction hydrogencarbonate + L-glutamine + 2 ATP + H2O = carbamoyl phosphate + L-glutamate + 2 ADP + phosphate + 2 H(+). It carries out the reaction hydrogencarbonate + NH4(+) + 2 ATP = carbamoyl phosphate + 2 ADP + phosphate + 2 H(+). It functions in the pathway amino-acid biosynthesis; L-arginine biosynthesis; carbamoyl phosphate from bicarbonate: step 1/1. The protein operates within pyrimidine metabolism; UMP biosynthesis via de novo pathway; (S)-dihydroorotate from bicarbonate: step 1/3. Large subunit of the glutamine-dependent carbamoyl phosphate synthetase (CPSase). CPSase catalyzes the formation of carbamoyl phosphate from the ammonia moiety of glutamine, carbonate, and phosphate donated by ATP, constituting the first step of 2 biosynthetic pathways, one leading to arginine and/or urea and the other to pyrimidine nucleotides. The large subunit (synthetase) binds the substrates ammonia (free or transferred from glutamine from the small subunit), hydrogencarbonate and ATP and carries out an ATP-coupled ligase reaction, activating hydrogencarbonate by forming carboxy phosphate which reacts with ammonia to form carbamoyl phosphate. The polypeptide is Carbamoyl phosphate synthase large chain (Streptococcus agalactiae serotype Ia (strain ATCC 27591 / A909 / CDC SS700)).